A 181-amino-acid chain; its full sequence is Photosystem I assembly protein Ycf4 (181 aa).

A run of 2 helical transmembrane segments spans residues 19–41 and 61–83; these read YFWA…SSYF and LVMS…TLFW.

The protein belongs to the Ycf4 family.

It localises to the plastid. Its subcellular location is the chloroplast thylakoid membrane. Seems to be required for the assembly of the photosystem I complex. This Trieres chinensis (Marine centric diatom) protein is Photosystem I assembly protein Ycf4.